The following is a 277-amino-acid chain: Uridine-cytidine kinase 1 (277 aa).

Positions 1 to 10 (MASAGGGDCE) are enriched in gly residues. Residues 1 to 29 (MASAGGGDCEGAGPEADRPHQRPFLIGVS) are disordered. 30–38 (GGTASGKST) provides a ligand contact to ATP. 6 residues coordinate substrate: D87, Y115, H120, R169, R178, and Q186. Residue D215 participates in ATP binding. Residues 246–277 (RSHKRTFPEPGEHPAVLASGKRSHLESSSRPH) form a disordered region. T251 bears the Phosphothreonine mark. The span at 268 to 277 (SHLESSSRPH) shows a compositional bias: basic and acidic residues.

Belongs to the uridine kinase family.

The enzyme catalyses uridine + ATP = UMP + ADP + H(+). The catalysed reaction is cytidine + ATP = CMP + ADP + H(+). Its pathway is pyrimidine metabolism; CTP biosynthesis via salvage pathway; CTP from cytidine: step 1/3. It functions in the pathway pyrimidine metabolism; UMP biosynthesis via salvage pathway; UMP from uridine: step 1/1. Functionally, phosphorylates uridine and cytidine to uridine monophosphate and cytidine monophosphate. Does not phosphorylate deoxyribonucleosides or purine ribonucleosides. Can use ATP or GTP as a phosphate donor. The protein is Uridine-cytidine kinase 1 (UCK1) of Bos taurus (Bovine).